The sequence spans 324 residues: dITP/XTP pyrophosphatase (324 aa).

The segment at 1–126 (MTKSIFEYKD…SDNKSDFGDV (126 aa)) is unknown. The segment at 127–324 (LLIATRNEGK…EVFPAWQNKQ (198 aa)) is NTP pyrophosphatase. 131-136 (TRNEGK) contributes to the substrate binding site. Aspartate 193 acts as the Proton acceptor in catalysis. Aspartate 193 serves as a coordination point for Mg(2+). Substrate contacts are provided by residues serine 194, 277-280 (FGYD), lysine 300, and 305-306 (HR).

It belongs to the HAM1 NTPase family. Homodimer. The cofactor is Mg(2+).

The catalysed reaction is XTP + H2O = XMP + diphosphate + H(+). The enzyme catalyses dITP + H2O = dIMP + diphosphate + H(+). It catalyses the reaction ITP + H2O = IMP + diphosphate + H(+). Pyrophosphatase that catalyzes the hydrolysis of nucleoside triphosphates to their monophosphate derivatives, with a high preference for the non-canonical purine nucleotides XTP (xanthosine triphosphate), dITP (deoxyinosine triphosphate) and ITP. Seems to function as a house-cleaning enzyme that removes non-canonical purine nucleotides from the nucleotide pool, thus preventing their incorporation into DNA/RNA and avoiding chromosomal lesions. The chain is dITP/XTP pyrophosphatase from Streptococcus thermophilus (strain ATCC BAA-250 / LMG 18311).